A 501-amino-acid polypeptide reads, in one-letter code: MENGKCNGATTVKLPEIKFTKLFINGQFIDAASGKTFETIDPRNGEVIATIAEGDKEDVDLAVNAARYAFDHGPWPRMTGFERAKLINKFADLIEENIEELAKLDAVDGGKLFQLGKYADIPATAGHFRYNAGAADKIHGETLKMTRQSLFGYTLKEPIGVVGNIIPWNFPSIMFATKVAPAMAAGCTMVVKPAEQTSLSALFYAHLSKEAGIPDGVLNIVTGFGSTAGAAIASHMDVDKVSFTGSTDVGRKIMQAAAASNLKKVSLELGGKSPLLIFNDADIDKAADLALLGCFYNKGEICVASSRVFVQEGIYDKVVEKLVEKAKDWTVGDPFDSTARQGPQVDKRQFEKILSYIEHGKNEGATLLTGGKAIGDKGYFIQPTIFADVTEDMKIYQDEIFGPVMSLMKFKTVEEGIKCANNTKYGLAAGILSQDIDLINTVSRSIKAGIIWVNCYFGFDLDCPYGGYKMSGNCRESGMDALDNYLQTKSVVMPLHNSPWM.

245-250 (GSTDVG) contributes to the NAD(+) binding site. The Proton acceptor role is filled by glutamate 268. The Nucleophile role is filled by cysteine 302.

Belongs to the aldehyde dehydrogenase family. As to quaternary structure, homotetramer.

It localises to the cytoplasm. It is found in the cytosol. The enzyme catalyses an aldehyde + NAD(+) + H2O = a carboxylate + NADH + 2 H(+). Its function is as follows. Involved in ferulic acid and sinapic acid biosynthesis by oxidation of conyferylaldehyde and sinapaldehyde, respectively. Can oxidize L-lactaldehyde. Possesses activity on acetaldehyde and glycolaldehyde in vitro. The chain is Aldehyde dehydrogenase family 2 member C4 (ALDH2C4) from Arabidopsis thaliana (Mouse-ear cress).